A 189-amino-acid polypeptide reads, in one-letter code: Probable nicotinate-nucleotide adenylyltransferase (189 aa).

Belongs to the NadD family.

It catalyses the reaction nicotinate beta-D-ribonucleotide + ATP + H(+) = deamido-NAD(+) + diphosphate. It participates in cofactor biosynthesis; NAD(+) biosynthesis; deamido-NAD(+) from nicotinate D-ribonucleotide: step 1/1. Its function is as follows. Catalyzes the reversible adenylation of nicotinate mononucleotide (NaMN) to nicotinic acid adenine dinucleotide (NaAD). This Bacillus cereus (strain ATCC 10987 / NRS 248) protein is Probable nicotinate-nucleotide adenylyltransferase.